A 169-amino-acid chain; its full sequence is Peptide deformylase 1 (169 aa).

Fe cation contacts are provided by cysteine 92 and histidine 134. Glutamate 135 is a catalytic residue. Residue histidine 138 coordinates Fe cation.

Belongs to the polypeptide deformylase family. Requires Fe(2+) as cofactor.

The enzyme catalyses N-terminal N-formyl-L-methionyl-[peptide] + H2O = N-terminal L-methionyl-[peptide] + formate. In terms of biological role, removes the formyl group from the N-terminal Met of newly synthesized proteins. Requires at least a dipeptide for an efficient rate of reaction. N-terminal L-methionine is a prerequisite for activity but the enzyme has broad specificity at other positions. This chain is Peptide deformylase 1, found in Ralstonia nicotianae (strain ATCC BAA-1114 / GMI1000) (Ralstonia solanacearum).